The primary structure comprises 195 residues: uncharacterized protein (195 aa).

An N-terminal signal peptide occupies residues 1 to 16 (MIRTIIVFMLLTISFG).

This is an uncharacterized protein from Acanthamoeba polyphaga mimivirus (APMV).